The following is a 574-amino-acid chain: Sulfate adenylyltransferase (574 aa).

Positions 1-169 are N-terminal; sequence MANPPHGGVL…IEAINKLNHY (169 aa). The tract at residues 170–394 is catalytic; sequence DYVALRYTPA…LRESSPPRHT (225 aa). Gln-197 contacts sulfate. Residues 197-200 and 291-294 contribute to the ATP site; these read QTRN and GRDH. Residues Thr-198, Arg-199, and Asn-200 contribute to the active site. Arg-199 is a binding site for sulfate. A sulfate-binding site is contributed by Ala-295. Val-333 contributes to the ATP binding site. The segment at 395–574 is allosteric regulation domain; adenylyl-sulfate kinase-like; sequence QGFTIFLTGY…LETEGFFDRS (180 aa). 3'-phosphoadenylyl sulfate is bound by residues 434 to 437, Arg-451, 477 to 478, and Arg-516; these read DTVR and IA.

In the N-terminal section; belongs to the sulfate adenylyltransferase family. This sequence in the C-terminal section; belongs to the APS kinase family. As to quaternary structure, homohexamer. Dimer of trimers.

The protein resides in the cytoplasm. The enzyme catalyses sulfate + ATP + H(+) = adenosine 5'-phosphosulfate + diphosphate. It participates in sulfur metabolism; hydrogen sulfide biosynthesis; sulfite from sulfate: step 1/3. Its activity is regulated as follows. Allosterically inhibited by 3'-phosphoadenosine 5'-phosphosulfate (PAPS). Catalyzes the first intracellular reaction of sulfate assimilation, forming adenosine-5'-phosphosulfate (APS) from inorganic sulfate and ATP. Plays an important role in sulfate activation as a component of the biosynthesis pathway of sulfur-containing amino acids. The polypeptide is Sulfate adenylyltransferase (Neosartorya fischeri (strain ATCC 1020 / DSM 3700 / CBS 544.65 / FGSC A1164 / JCM 1740 / NRRL 181 / WB 181) (Aspergillus fischerianus)).